A 380-amino-acid polypeptide reads, in one-letter code: Cytochrome b (380 aa).

4 helical membrane passes run phenylalanine 34 to threonine 54, tryptophan 78 to isoleucine 99, tryptophan 114 to leucine 134, and phenylalanine 179 to threonine 199. Heme b contacts are provided by histidine 84 and histidine 98. Positions 183 and 197 each coordinate heme b. Residue histidine 202 coordinates a ubiquinone. 4 helical membrane passes run leucine 227–serine 247, leucine 289–histidine 309, isoleucine 321–serine 341, and phenylalanine 348–proline 368.

Belongs to the cytochrome b family. In terms of assembly, the cytochrome bc1 complex contains 11 subunits: 3 respiratory subunits (MT-CYB, CYC1 and UQCRFS1), 2 core proteins (UQCRC1 and UQCRC2) and 6 low-molecular weight proteins (UQCRH/QCR6, UQCRB/QCR7, UQCRQ/QCR8, UQCR10/QCR9, UQCR11/QCR10 and a cleavage product of UQCRFS1). This cytochrome bc1 complex then forms a dimer. Heme b is required as a cofactor.

It localises to the mitochondrion inner membrane. In terms of biological role, component of the ubiquinol-cytochrome c reductase complex (complex III or cytochrome b-c1 complex) that is part of the mitochondrial respiratory chain. The b-c1 complex mediates electron transfer from ubiquinol to cytochrome c. Contributes to the generation of a proton gradient across the mitochondrial membrane that is then used for ATP synthesis. In Buteo buteo (Eurasian buzzard), this protein is Cytochrome b (MT-CYB).